The following is a 149-amino-acid chain: Ribonuclease H (149 aa).

Positions methionine 1–glutamate 143 constitute an RNase H type-1 domain. Residues aspartate 9, glutamate 47, aspartate 69, and aspartate 135 each contribute to the Mg(2+) site.

This sequence belongs to the RNase H family. As to quaternary structure, monomer. Mg(2+) serves as cofactor.

It is found in the cytoplasm. The catalysed reaction is Endonucleolytic cleavage to 5'-phosphomonoester.. In terms of biological role, endonuclease that specifically degrades the RNA of RNA-DNA hybrids. The polypeptide is Ribonuclease H (Albidiferax ferrireducens (strain ATCC BAA-621 / DSM 15236 / T118) (Rhodoferax ferrireducens)).